The chain runs to 411 residues: Transforming growth factor beta regulator 1 (411 aa).

2 disordered regions span residues 1 to 29 (MSLLDGLASSPRAPLQSSKARMKKLPKKS) and 119 to 146 (GPISGPSTGAEEPFGKKTKKEKKEKGKE). The residue at position 2 (Ser2) is an N-acetylserine. A Phosphoserine modification is found at Ser10. The region spanning 182-241 (VFPIGLGGLTVYSLGEIITDRPGFHDESAIYPVGYCSTRIYASMKCPDQKCLYTCQIKDG) is the FYR N-terminal domain. Positions 242–321 (GVQPQFEIVP…RKCINYQWVK (80 aa)) constitute an FYR C-terminal domain.

Belongs to the TBRG1 family. Interacts with CDKN2A and MDM2. In terms of processing, ubiquitinated; mediated by MDM2 and leading to its subsequent proteasomal degradation. As to expression, widely expressed at low levels in most tissues, with highest levels in pancreas, lung and liver. Expression is decreased in primary tumors including lung, liver, breast, pancreas and kidney carcinomas, chronic lymphocytic leukemia and diffuse large B-cell lymphoma.

The protein localises to the nucleus. In terms of biological role, acts as a growth inhibitor. Can activate p53/TP53, causes G1 arrest and collaborates with CDKN2A to restrict proliferation, but does not require either protein to inhibit DNA synthesis. Redistributes CDKN2A into the nucleoplasm. Involved in maintaining chromosomal stability. This is Transforming growth factor beta regulator 1 (TBRG1) from Homo sapiens (Human).